The chain runs to 125 residues: Oxytocin-neurophysin 1 (125 aa).

The first 19 residues, 1–19 (MACPSLACCLLGLLALTSA), serve as a signal peptide directing secretion. Cysteine 20 and cysteine 25 are joined by a disulfide. At glycine 28 the chain carries Glycine amide. Intrachain disulfides connect cysteine 41/cysteine 85, cysteine 44/cysteine 58, cysteine 52/cysteine 75, cysteine 59/cysteine 65, cysteine 92/cysteine 104, cysteine 98/cysteine 116, and cysteine 105/cysteine 110.

This sequence belongs to the vasopressin/oxytocin family. As to quaternary structure, interacts with oxytocin receptor (Ki=1.5 nM). Interacts with vasopressin V1aR/AVPR1A (Ki=37 nM), V1bR/AVPR1B (Ki=222 nM), and V2R/AVPR2 receptors (Ki=823 nM).

Functionally, neurophysin 1 specifically binds oxytocin. In terms of biological role, oxytocin causes contraction of the smooth muscle of the uterus and of the mammary gland. Acts by binding to oxytocin receptor (OXTR). The chain is Oxytocin-neurophysin 1 (Oxt) from Rattus norvegicus (Rat).